A 169-amino-acid polypeptide reads, in one-letter code: Endoribonuclease YbeY (169 aa).

The interval 72–95 (GPVAAPRQEPDSPPACRKDSSHAE) is disordered. The Zn(2+) site is built by histidine 131, histidine 135, and histidine 141.

It belongs to the endoribonuclease YbeY family. It depends on Zn(2+) as a cofactor.

The protein resides in the cytoplasm. Its function is as follows. Single strand-specific metallo-endoribonuclease involved in late-stage 70S ribosome quality control and in maturation of the 3' terminus of the 16S rRNA. The sequence is that of Endoribonuclease YbeY from Oleidesulfovibrio alaskensis (strain ATCC BAA-1058 / DSM 17464 / G20) (Desulfovibrio alaskensis).